Here is a 458-residue protein sequence, read N- to C-terminus: A-type ATP synthase subunit B (458 aa).

The protein belongs to the ATPase alpha/beta chains family. Has multiple subunits with at least A(3), B(3), C, D, E, F, H, I and proteolipid K(x).

It localises to the cell membrane. Component of the A-type ATP synthase that produces ATP from ADP in the presence of a proton gradient across the membrane. The B chain is a regulatory subunit. This Methanocorpusculum labreanum (strain ATCC 43576 / DSM 4855 / Z) protein is A-type ATP synthase subunit B.